The primary structure comprises 300 residues: Tyrosine recombinase XerC (300 aa).

A Core-binding (CB) domain is found at 2-88; it reads IQEGKLEQQF…SLRSFYTFLL (87 aa). The Tyr recombinase domain maps to 109–294; the sequence is RLPKFFYSEE…TKEHLKSTYM (186 aa). Active-site residues include R150, K174, H246, R249, and H272. The active-site O-(3'-phospho-DNA)-tyrosine intermediate is Y281.

This sequence belongs to the 'phage' integrase family. XerC subfamily. In terms of assembly, forms a cyclic heterotetrameric complex composed of two molecules of XerC and two molecules of XerD.

It is found in the cytoplasm. Its function is as follows. Site-specific tyrosine recombinase, which acts by catalyzing the cutting and rejoining of the recombining DNA molecules. The XerC-XerD complex is essential to convert dimers of the bacterial chromosome into monomers to permit their segregation at cell division. It also contributes to the segregational stability of plasmids. This chain is Tyrosine recombinase XerC, found in Listeria monocytogenes serotype 4b (strain F2365).